A 145-amino-acid chain; its full sequence is D-aminoacyl-tRNA deacylase (145 aa).

The short motif at 137 to 138 (GP) is the Gly-cisPro motif, important for rejection of L-amino acids element.

This sequence belongs to the DTD family. As to quaternary structure, homodimer.

Its subcellular location is the cytoplasm. The enzyme catalyses glycyl-tRNA(Ala) + H2O = tRNA(Ala) + glycine + H(+). It catalyses the reaction a D-aminoacyl-tRNA + H2O = a tRNA + a D-alpha-amino acid + H(+). An aminoacyl-tRNA editing enzyme that deacylates mischarged D-aminoacyl-tRNAs. Also deacylates mischarged glycyl-tRNA(Ala), protecting cells against glycine mischarging by AlaRS. Acts via tRNA-based rather than protein-based catalysis; rejects L-amino acids rather than detecting D-amino acids in the active site. By recycling D-aminoacyl-tRNA to D-amino acids and free tRNA molecules, this enzyme counteracts the toxicity associated with the formation of D-aminoacyl-tRNA entities in vivo and helps enforce protein L-homochirality. The chain is D-aminoacyl-tRNA deacylase from Klebsiella pneumoniae (strain 342).